We begin with the raw amino-acid sequence, 230 residues long: MAIGKRLKKAREGVDREKLYPLADAIKMVKERAVSKFDETIEIAINLGVDPRHADQMVRGVVTLPNGTGRTLRVGVFARGAKADEARAAGADVVGAEDLVEKVQGGTIEFDRCIATPDMMPLVGRLGKVLGPRGMMPNPKIGTVTMDITNAVKGAKGGSVEFRVEKAGIVQAGIGKASFGEDKLVENIKALTDAVSKAKPAGAKGTYIQRVAVSSTMGPGVKVEPGSILG.

The protein belongs to the universal ribosomal protein uL1 family. In terms of assembly, part of the 50S ribosomal subunit.

Binds directly to 23S rRNA. The L1 stalk is quite mobile in the ribosome, and is involved in E site tRNA release. In terms of biological role, protein L1 is also a translational repressor protein, it controls the translation of the L11 operon by binding to its mRNA. This chain is Large ribosomal subunit protein uL1, found in Rhodopseudomonas palustris (strain BisB18).